Here is a 139-residue protein sequence, read N- to C-terminus: Putative translationally-controlled tumor protein-like protein TPT1P8 (139 aa).

Residues 1-139 (MIIFQDLISH…KTTSSLLVKT (139 aa)) enclose the TCTP domain. Positions 40 to 51 (TGNTDDSLIGRN) are enriched in polar residues. Positions 40 to 60 (TGNTDDSLIGRNSSSESTEDE) are disordered.

The protein belongs to the TCTP family.

This chain is Putative translationally-controlled tumor protein-like protein TPT1P8 (TPT1P8), found in Homo sapiens (Human).